The chain runs to 385 residues: Alanine--glyoxylate aminotransferase 1 (385 aa).

Residue Lys201 is modified to N6-(pyridoxal phosphate)lysine. Arg354 contributes to the substrate binding site.

Belongs to the class-V pyridoxal-phosphate-dependent aminotransferase family. Homodimer. It depends on pyridoxal 5'-phosphate as a cofactor.

The enzyme catalyses glyoxylate + L-alanine = glycine + pyruvate. It participates in amino-acid biosynthesis; glycine biosynthesis; glycine from glyoxylate: step 1/1. Functionally, has alanine:glyoxylate aminotransferase activity. This is Alanine--glyoxylate aminotransferase 1 from Saccharomyces cerevisiae (strain ATCC 204508 / S288c) (Baker's yeast).